We begin with the raw amino-acid sequence, 446 residues long: Trigger factor (446 aa).

One can recognise a PPIase FKBP-type domain in the interval 161–246 (GDRLTIDFKG…VSKVERSELP (86 aa)). The segment at 422 to 446 (VSYEDAVKPRTAPAEQAEDGEQSAE) is disordered. Over residues 437–446 (QAEDGEQSAE) the composition is skewed to acidic residues.

The protein belongs to the FKBP-type PPIase family. Tig subfamily.

The protein localises to the cytoplasm. It carries out the reaction [protein]-peptidylproline (omega=180) = [protein]-peptidylproline (omega=0). Its function is as follows. Involved in protein export. Acts as a chaperone by maintaining the newly synthesized protein in an open conformation. Functions as a peptidyl-prolyl cis-trans isomerase. This Hahella chejuensis (strain KCTC 2396) protein is Trigger factor.